The chain runs to 108 residues: Putative septation protein SpoVG (108 aa).

The interval F84–E108 is disordered. Residues P94–E108 are compositionally biased toward acidic residues.

Belongs to the SpoVG family.

In terms of biological role, could be involved in septation. The protein is Putative septation protein SpoVG of Finegoldia magna (strain ATCC 29328 / DSM 20472 / WAL 2508) (Peptostreptococcus magnus).